The sequence spans 159 residues: Transcription repressor OFP6 (159 aa).

A disordered region spans residues P39–S60. Residues S51–S60 show a composition bias toward low complexity. Residues V70 to D129 enclose the OVATE domain.

As to quaternary structure, interacts with KNAT1 and KNAT7. In terms of tissue distribution, expressed in roots, shoots, rosette and cauline leaves, stems, flower buds and siliques.

The protein localises to the nucleus. Transcriptional repressor that regulates multiple aspects of plant growth and development through the regulation of BEL1-LIKE (BLH) and KNOX TALE (KNAT) homeodomain transcription factors. The polypeptide is Transcription repressor OFP6 (OFP6) (Arabidopsis thaliana (Mouse-ear cress)).